Reading from the N-terminus, the 924-residue chain is Autophagy-related protein 9B (924 aa).

Positions M1–P144 are disordered. Residues M1–G207 are Cytoplasmic-facing. The segment covering W17 to L27 has biased composition (low complexity). A compositionally biased stretch (pro residues) spans L28–C40. The span at L78–H88 shows a compositional bias: polar residues. Low complexity predominate over residues P98–S113. Residues Y151–L154 carry the Tyrosine-based sorting signal motif. Residues F208–F228 traverse the membrane as a helical segment. The Lumenal portion of the chain corresponds to T229 to R276. Residues S277–L297 form a helical membrane-spanning segment. Topologically, residues R298–T438 are cytoplasmic. The stretch at V439–L459 is an intramembrane region. Topologically, residues H460–L526 are cytoplasmic. Residues L527 to V547 traverse the membrane as a helical segment. Topologically, residues Y548–D551 are lumenal. Residues V552 to A572 form a helical membrane-spanning segment. The Cytoplasmic portion of the chain corresponds to R573–A624. The stretch at V625–F645 is an intramembrane region. Over R646–D924 the chain is Cytoplasmic. Residues Q847–D924 form a disordered region. The span at S878–P890 shows a compositional bias: low complexity. The segment covering T913–D924 has biased composition (basic and acidic residues).

Belongs to the ATG9 family. Homotrimer; forms a homotrimer with a central pore that forms a path between the two membrane leaflets. In terms of tissue distribution, highly expressed in placenta (trophoblast cells) and pituitary gland. Not expressed in vascular endothelial.

The protein localises to the preautophagosomal structure membrane. The catalysed reaction is a 1,2-diacyl-sn-glycero-3-phosphocholine(in) = a 1,2-diacyl-sn-glycero-3-phosphocholine(out). It carries out the reaction a 1,2-diacyl-sn-glycero-3-phospho-L-serine(in) = a 1,2-diacyl-sn-glycero-3-phospho-L-serine(out). The enzyme catalyses a 1,2-diacyl-sn-glycero-3-phosphoethanolamine(in) = a 1,2-diacyl-sn-glycero-3-phosphoethanolamine(out). Functionally, phospholipid scramblase involved in autophagy by mediating autophagosomal membrane expansion. Cycles between the preautophagosomal structure/phagophore assembly site (PAS) and the cytoplasmic vesicle pool and supplies membrane for the growing autophagosome. Lipid scramblase activity plays a key role in preautophagosomal structure/phagophore assembly by distributing the phospholipids that arrive through ATG2 (ATG2A or ATG2B) from the cytoplasmic to the luminal leaflet of the bilayer, thereby driving autophagosomal membrane expansion. In addition to autophagy, also plays a role in necrotic cell death. The chain is Autophagy-related protein 9B (ATG9B) from Homo sapiens (Human).